The following is a 188-amino-acid chain: Tumor necrosis factor alpha-induced protein 8-like protein (188 aa).

This sequence belongs to the TNFAIP8 family.

In Drosophila pseudoobscura pseudoobscura (Fruit fly), this protein is Tumor necrosis factor alpha-induced protein 8-like protein.